We begin with the raw amino-acid sequence, 206 residues long: Small ribosomal subunit protein uS4 (206 aa).

The 62-residue stretch at 96–157 (CRLDNVVYRM…KCRNQLRIAQ (62 aa)) folds into the S4 RNA-binding domain.

It belongs to the universal ribosomal protein uS4 family. Part of the 30S ribosomal subunit. Contacts protein S5. The interaction surface between S4 and S5 is involved in control of translational fidelity.

Functionally, one of the primary rRNA binding proteins, it binds directly to 16S rRNA where it nucleates assembly of the body of the 30S subunit. In terms of biological role, with S5 and S12 plays an important role in translational accuracy. The polypeptide is Small ribosomal subunit protein uS4 (Stutzerimonas stutzeri (strain A1501) (Pseudomonas stutzeri)).